Reading from the N-terminus, the 114-residue chain is Large ribosomal subunit protein uL18 (114 aa).

This sequence belongs to the universal ribosomal protein uL18 family. As to quaternary structure, part of the 50S ribosomal subunit; part of the 5S rRNA/L5/L18/L25 subcomplex. Contacts the 5S and 23S rRNAs.

Functionally, this is one of the proteins that bind and probably mediate the attachment of the 5S RNA into the large ribosomal subunit, where it forms part of the central protuberance. In Porphyromonas gingivalis (strain ATCC 33277 / DSM 20709 / CIP 103683 / JCM 12257 / NCTC 11834 / 2561), this protein is Large ribosomal subunit protein uL18.